The primary structure comprises 123 residues: Small ribosomal subunit protein uS12 (123 aa).

At Asp89 the chain carries 3-methylthioaspartic acid.

The protein belongs to the universal ribosomal protein uS12 family. Part of the 30S ribosomal subunit. Contacts proteins S8 and S17. May interact with IF1 in the 30S initiation complex.

Its function is as follows. With S4 and S5 plays an important role in translational accuracy. Interacts with and stabilizes bases of the 16S rRNA that are involved in tRNA selection in the A site and with the mRNA backbone. Located at the interface of the 30S and 50S subunits, it traverses the body of the 30S subunit contacting proteins on the other side and probably holding the rRNA structure together. The combined cluster of proteins S8, S12 and S17 appears to hold together the shoulder and platform of the 30S subunit. This Syntrophotalea carbinolica (strain DSM 2380 / NBRC 103641 / GraBd1) (Pelobacter carbinolicus) protein is Small ribosomal subunit protein uS12.